Here is a 175-residue protein sequence, read N- to C-terminus: Alpha-crystallin B chain (175 aa).

M1 is subject to N-acetylmethionine. S19 carries the post-translational modification Phosphoserine. O-linked (GlcNAc) serine glycosylation is present at S41. Phosphoserine is present on residues S45 and S59. Residues 56-164 (RAPSWIDTGL…PERTIPITRE (109 aa)) form the sHSP domain. H83 contributes to the Zn(2+) binding site. K92 is modified (N6-acetyllysine). Residues H104, E106, H111, and H119 each contribute to the Zn(2+) site. Residues 142-175 (VLTVNGPRKQAPGPERTIPITREEKPAVTAAPKK) form a disordered region. The residue at position 166 (K166) is an N6-acetyllysine. O-linked (GlcNAc) threonine glycosylation occurs at T170.

Belongs to the small heat shock protein (HSP20) family. As to quaternary structure, heteromer composed of three CRYAA and one CRYAB subunits. Aggregates with homologous proteins, including the small heat shock protein HSPB1, to form large heteromeric complexes. Inter-subunit bridging via zinc ions enhances stability, which is crucial as there is no protein turn over in the lens. Interacts with HSPBAP1 and TTN/titin. Interacts with TMEM109; in the cellular response to DNA damage. Interacts with DES; binds rapidly during early stages of DES filament assembly and a reduced binding seen in the later stages. Interacts with TMED10; the interaction mediates the translocation from the cytoplasm into the ERGIC (endoplasmic reticulum-Golgi intermediate compartment) and thereby secretion. Interacts with ATP6V1A and with MTOR, forming a ternary complex. Lens as well as other tissues.

It localises to the cytoplasm. The protein localises to the nucleus. Its subcellular location is the secreted. The protein resides in the lysosome. May contribute to the transparency and refractive index of the lens. Has chaperone-like activity, preventing aggregation of various proteins under a wide range of stress conditions. In lens epithelial cells, stabilizes the ATP6V1A protein, preventing its degradation by the proteasome. The sequence is that of Alpha-crystallin B chain (CRYAB) from Oryctolagus cuniculus (Rabbit).